The following is a 368-amino-acid chain: 3-dehydroquinate synthase (368 aa).

Residues Gly112 to Asp116, Thr136 to Thr137, Lys149, and Lys158 each bind NAD(+). Zn(2+) contacts are provided by Glu191, His256, and His273.

Belongs to the sugar phosphate cyclases superfamily. Dehydroquinate synthase family. The cofactor is Co(2+). Zn(2+) is required as a cofactor. NAD(+) serves as cofactor.

The protein localises to the cytoplasm. The catalysed reaction is 7-phospho-2-dehydro-3-deoxy-D-arabino-heptonate = 3-dehydroquinate + phosphate. The protein operates within metabolic intermediate biosynthesis; chorismate biosynthesis; chorismate from D-erythrose 4-phosphate and phosphoenolpyruvate: step 2/7. Functionally, catalyzes the conversion of 3-deoxy-D-arabino-heptulosonate 7-phosphate (DAHP) to dehydroquinate (DHQ). This Prochlorococcus marinus (strain NATL1A) protein is 3-dehydroquinate synthase.